Consider the following 130-residue polypeptide: Small ribosomal subunit protein uS9 (130 aa).

This sequence belongs to the universal ribosomal protein uS9 family.

In Idiomarina loihiensis (strain ATCC BAA-735 / DSM 15497 / L2-TR), this protein is Small ribosomal subunit protein uS9.